We begin with the raw amino-acid sequence, 124 residues long: Snake venom vascular endothelial growth factor toxin apiscin (124 aa).

Positions 1 to 24 are cleaved as a signal peptide; the sequence is MAAYLLAVAILFCIQGWPSGTVQG. Position 25 is a pyrrolidone carboxylic acid (Gln-25). Cystine bridges form between Cys-38/Cys-80, Cys-69/Cys-115, and Cys-73/Cys-117.

It belongs to the PDGF/VEGF growth factor family. Snake venom VEGF subfamily. As to quaternary structure, homodimer; disulfide-linked. Interacts with VEGF receptor-1 (FLT1) with a high affinity, whereas it binds to VEGF receptor-2 (KDR) with a low affinity. Does not bind VEGF receptor-3 (FLT4). In terms of tissue distribution, expressed by the venom gland.

The protein resides in the secreted. In terms of biological role, snake venom VEGFs that may contribute to venom dispersion and prey subjugation by inducing vascular permeability and hypotension. This protein induces an increase in capillary permeability after intradermal injection, as well as a drastic hypotensive effect after intravenous injection. The hypotension is mediated by nitric oxide (NO), which is produced by VEGF-activated endothelium NO synthase. Also induces angiogenesis in vitro. Like other crotalid VEGFs, this protein interacts with VEGF receptor-1 (FLT1) with a high affinity, whereas it binds to VEGF receptor-2 (KDR) with a low affinity. The polypeptide is Snake venom vascular endothelial growth factor toxin apiscin (Agkistrodon piscivorus piscivorus (Eastern cottonmouth)).